A 432-amino-acid polypeptide reads, in one-letter code: RNA exonuclease 4 (432 aa).

The segment covering 42 to 54 (ARKKAKKKFRKSK) has biased composition (basic residues). Residues 42–177 (ARKKAKKKFR…AKKRTYSDIS (136 aa)) are disordered. The span at 121 to 137 (KASDKSKGDKQRTEKAK) shows a compositional bias: basic and acidic residues. Ser123 carries the post-translational modification Phosphoserine. A Glycyl lysine isopeptide (Lys-Gly) (interchain with G-Cter in SUMO2) cross-link involves residue Lys127. In terms of domain architecture, Exonuclease spans 230–381 (KRLGQKKRTI…PSLKRLSEKI (152 aa)).

The protein belongs to the REXO4 family. As to quaternary structure, can bind ESR1 and ESR2. This interaction is abrogated by estrogen and augmented by tamoxifen treatment.

Its subcellular location is the nucleus. The protein resides in the nucleolus. May function as an exonuclease. The chain is RNA exonuclease 4 (Rexo4) from Mus musculus (Mouse).